Reading from the N-terminus, the 324-residue chain is 4-hydroxybenzoyl-CoA reductase subunit beta (324 aa).

The FAD-binding PCMH-type domain maps to Asn2–Ala217. FAD contacts are provided by residues Pro29–Leu36, Thr111, Asn115, and Gln118. [4Fe-4S] cluster contacts are provided by Cys122, Cys138, Cys146, and Cys155. Residues Asp162 and Lys224 each contribute to the FAD site.

As to quaternary structure, heterohexamer of two alpha, two beta and two gamma subunits. It depends on FAD as a cofactor. The cofactor is [4Fe-4S] cluster.

The enzyme catalyses oxidized 2[4Fe-4S]-[ferredoxin] + benzoyl-CoA + H2O = 4-hydroxybenzoyl-CoA + reduced 2[4Fe-4S]-[ferredoxin] + 2 H(+). Inactivated by low concentrations of cyanide in vitro. Functionally, component of a complex that catalyzes the reductive dehydroxylation of 4-hydroxybenzoyl-CoA to benzoyl-CoA. Reaction is not reversible. Is a key enzyme in the anaerobic degradation of phenolic compounds. The chain is 4-hydroxybenzoyl-CoA reductase subunit beta (hcrB) from Thauera aromatica.